Consider the following 198-residue polypeptide: Dephospho-CoA kinase (198 aa).

Residues 2-90 (LIAIVGKPGV…KLSLVTKPLL (89 aa)) enclose the DPCK domain. Residue 10 to 15 (GVGKTS) coordinates ATP.

The protein belongs to the CoaE family.

It is found in the cytoplasm. The catalysed reaction is 3'-dephospho-CoA + ATP = ADP + CoA + H(+). The protein operates within cofactor biosynthesis; coenzyme A biosynthesis; CoA from (R)-pantothenate: step 5/5. Its function is as follows. Catalyzes the phosphorylation of the 3'-hydroxyl group of dephosphocoenzyme A to form coenzyme A. The polypeptide is Dephospho-CoA kinase (Mycoplasma genitalium (strain ATCC 33530 / DSM 19775 / NCTC 10195 / G37) (Mycoplasmoides genitalium)).